A 121-amino-acid polypeptide reads, in one-letter code: Parathyroid hormone-related protein (121 aa).

A signal peptide spans 1–14; the sequence is VGVFLLSYSVPSCG. Residues 15 to 24 constitute a propeptide that is removed on maturation; it reads RSVEELGRRL. An important for receptor binding region spans residues 47 to 58; sequence RFFLHHLIAEIH. The segment at 61 to 121 is disordered; it reads EIRATSEVSP…PGKKKKGKPG (61 aa). Over residues 66 to 80 the composition is skewed to polar residues; it reads SEVSPNSKPAPNTKN. Residues 98–119 carry the Nuclear localization signal motif; sequence TNKVETYKEQPLKTPGKKKKGK. Positions 99–108 are enriched in basic and acidic residues; that stretch reads NKVETYKEQP. Positions 112–121 are enriched in basic residues; it reads PGKKKKGKPG.

It belongs to the parathyroid hormone family. As to quaternary structure, PTHrP interacts with PTH1R (via N-terminal extracellular domain).

It localises to the secreted. The protein resides in the cytoplasm. The protein localises to the nucleus. Neuroendocrine peptide which is a critical regulator of cellular and organ growth, development, migration, differentiation and survival and of epithelial calcium ion transport. Acts by binding to its receptor, PTH1R, activating G protein-coupled receptor signaling. Regulates endochondral bone development and epithelial-mesenchymal interactions during the formation of the mammary glands and teeth. Required for skeletal homeostasis. Promotes mammary mesenchyme differentiation and bud outgrowth by modulating mesenchymal cell responsiveness to BMPs. Up-regulates BMPR1A expression in the mammary mesenchyme and this increases the sensitivity of these cells to BMPs and allows them to respond to BMP4 in a paracrine and/or autocrine fashion. BMP4 signaling in the mesenchyme, in turn, triggers epithelial outgrowth and augments MSX2 expression, which causes the mammary mesenchyme to inhibit hair follicle formation within the nipple sheath. The polypeptide is Parathyroid hormone-related protein (PTHLH) (Ovis aries (Sheep)).